Consider the following 426-residue polypeptide: MASKEMFEDTVEERVINEEYKIWKKNTPFLYDLVMTHALQWPSLTVQWLPEVTKPEGKDYALHWLVLGTHTSDEQNHLVVARVHIPNDDAQFDASHCDSDKGEFGGFGSVTGKIECEIKINHEGEVNRARYMPQNPHIIATKTPSSGVLVFDYTKHPAKPDPSGECNPDLRLRGHQKEGYGLSWNSNLSGHLLSASDDHTVCLWDINAGPKEGKIVDAKAVFTGHSAVVEDVAWHLLHESLFGSVADDQKLMMWDTRSNTTSKPSHLVDAHTAEVNCLSFNPYSEFILATGSADKTVALWDLRNLKLKLHTFESHKDEIFQVVHWSPHNETILASSGTDRRLNVWDLSKIGEEQSAEDAEDGPPELLFIHGGHTAKISDFSWNPNEPWVICSVSEDNIMQIWQMAENIYNDEESDVTTSELEGQGS.

A2 is modified (N-acetylalanine). S3 is modified (phosphoserine). K4 carries the N6-acetyllysine; alternate modification. A Glycyl lysine isopeptide (Lys-Gly) (interchain with G-Cter in SUMO2); alternate cross-link involves residue K4. A Glycyl lysine isopeptide (Lys-Gly) (interchain with G-Cter in ubiquitin); alternate cross-link involves residue K4. The residue at position 10 (T10) is a Phosphothreonine. WD repeat units lie at residues 47–122 (QWLP…KINH), 128–173 (RARY…LRLR), 181–217 (GLSW…KIVD), 228–269 (VVED…HLVD), 275–312 (VNCL…LHTF), 318–370 (EIFQ…LFIH), and 377–404 (ISDF…IWQM). A Phosphoserine modification is found at S95. Residue K101 forms a Glycyl lysine isopeptide (Lys-Gly) (interchain with G-Cter in SUMO2) linkage. K119 is subject to N6-acetyllysine. K155 participates in a covalent cross-link: Glycyl lysine isopeptide (Lys-Gly) (interchain with G-Cter in SUMO2). K159 carries the post-translational modification N6-acetyllysine; alternate. K159 participates in a covalent cross-link: Glycyl lysine isopeptide (Lys-Gly) (interchain with G-Cter in SUMO2); alternate. Position 355 is a phosphoserine (S355).

The protein belongs to the WD repeat RBAP46/RBAP48/MSI1 family. In terms of assembly, binds directly to helix 1 of the histone fold of histone H4, a region that is not accessible when H4 is in chromatin. Subunit of the type B histone acetyltransferase (HAT) complex, composed of RBBP7 and HAT1. Subunit of the core histone deacetylase (HDAC) complex, which is composed of HDAC1, HDAC2, RBBP4 and RBBP7. The core HDAC complex associates with SIN3A, ARID4B/SAP180, SAP18, SAP30, SAP130, SUDS3/SAP45 and possibly ARID4A/RBP1 and ING1 to form the SIN3 HDAC complex. Component of the nucleosome remodeling and deacetylase (NuRD) repressor complex, composed of core proteins MTA1, MTA2, MTA3, RBBP4, RBBP7, HDAC1, HDAC2, MBD2, MBD3, and peripherally associated proteins CDK2AP1, CDK2AP2, GATAD2A, GATAD2B, CHD3, CHD4 and CHD5. The exact stoichiometry of the NuRD complex is unknown, and some subunits such as MBD2 and MBD3, GATAD2A and GATAD2B, and CHD3, CHD4 and CHD5 define mutually exclusive NuRD complexes. The NuRD complex may interact with MBD3L1. The NuRD complex may interact with MBD3L2. Subunit of the PRC2/EED-EZH2 complex, which is composed of at least EED, EZH2, RBBP4, RBBP7 and SUZ12. The PRC2/EED-EZH2 complex may also associate with HDAC1. Component of the NURF-1 ISWI chromatin remodeling complex (also called the nucleosome-remodeling factor (NURF) complex) at least composed of SMARCA1, BPTF, RBBP4 and RBBP7. Within the complex interacts with SMARCA1. Component of the BPFT-SMARCA1 complex at least composed of SMARCA1, BPFT, RBBP4 and RBBP7; the complex is catalytically inactive and does not remodel chromatin. Within the complex interacts with SMARCA1. Interacts with BRCA1. Interacts with CDK2AP1. Interacts with CENPA. Interacts with CHD3. Interacts with CHD4. Interacts with CREBBP, and this interaction may be enhanced by the binding of phosphorylated CREB1 to CREBBP. Interacts with HDAC7. Interacts with MTA1. Interacts with PWWP2B. Interacts with RB1 (via viral protein-binding domain). Interacts with SUV39H1.

It localises to the nucleus. In terms of biological role, core histone-binding subunit that may target chromatin remodeling factors, histone acetyltransferases and histone deacetylases to their histone substrates in a manner that is regulated by nucleosomal DNA. Component of several complexes which regulate chromatin metabolism. These include the type B histone acetyltransferase (HAT) complex, which is required for chromatin assembly following DNA replication; the core histone deacetylase (HDAC) complex, which promotes histone deacetylation and consequent transcriptional repression; the nucleosome remodeling and histone deacetylase complex (the NuRD complex), which promotes transcriptional repression by histone deacetylation and nucleosome remodeling; and the PRC2/EED-EZH2 complex, which promotes repression of homeotic genes during development; and the NURF (nucleosome remodeling factor) complex. This chain is Histone-binding protein RBBP7 (RBBP7), found in Pongo abelii (Sumatran orangutan).